The following is a 172-amino-acid chain: Large ribosomal subunit protein uL10 (172 aa).

Belongs to the universal ribosomal protein uL10 family. As to quaternary structure, part of the ribosomal stalk of the 50S ribosomal subunit. The N-terminus interacts with L11 and the large rRNA to form the base of the stalk. The C-terminus forms an elongated spine to which L12 dimers bind in a sequential fashion forming a multimeric L10(L12)X complex.

In terms of biological role, forms part of the ribosomal stalk, playing a central role in the interaction of the ribosome with GTP-bound translation factors. This Methylorubrum populi (strain ATCC BAA-705 / NCIMB 13946 / BJ001) (Methylobacterium populi) protein is Large ribosomal subunit protein uL10.